A 218-amino-acid chain; its full sequence is MSDIEIKGILGKKLGMTQIFDDENRVVPVTVVEAGPCVVTQVRTKDIDGYEAVQIAFGEIDPRKVNKPESGHFKKAGVTPRRHVAEIRVADASGYEVGQDVTVEIFNEVDFVDVTGTSKGHGFAGGMKRHGFAGQGAAHGNQAAHRRVGGIGGAATPGRVFKGKRMAGRMGNNRVTMQNLKVAKVDTDSNLLLIKGAVPGINGGIVVVKTAVKGGAKA.

The protein belongs to the universal ribosomal protein uL3 family. As to quaternary structure, part of the 50S ribosomal subunit. Forms a cluster with proteins L14 and L19.

One of the primary rRNA binding proteins, it binds directly near the 3'-end of the 23S rRNA, where it nucleates assembly of the 50S subunit. The sequence is that of Large ribosomal subunit protein uL3 from Corynebacterium urealyticum (strain ATCC 43042 / DSM 7109).